The following is a 209-amino-acid chain: Methylated-DNA--protein-cysteine methyltransferase (209 aa).

Residue cysteine 5 participates in Zn(2+) binding. Serine 14 bears the Phosphoserine mark. Residues cysteine 24, histidine 29, and histidine 89 each coordinate Zn(2+). The DNA site is built by threonine 99, tyrosine 118, glutamine 119, asparagine 127, and arginine 132. Cysteine 149 (nucleophile; methyl group acceptor) is an active-site residue. Serine 155 is a binding site for DNA.

This sequence belongs to the MGMT family. Zn(2+) is required as a cofactor.

Its subcellular location is the nucleus. It carries out the reaction a 6-O-methyl-2'-deoxyguanosine in DNA + L-cysteinyl-[protein] = S-methyl-L-cysteinyl-[protein] + a 2'-deoxyguanosine in DNA. The catalysed reaction is a 4-O-methyl-thymidine in DNA + L-cysteinyl-[protein] = a thymidine in DNA + S-methyl-L-cysteinyl-[protein]. Its function is as follows. Involved in the cellular defense against the biological effects of O6-methylguanine (O6-MeG) and O4-methylthymine (O4-MeT) in DNA. Repairs the methylated nucleobase in DNA by stoichiometrically transferring the methyl group to a cysteine residue in the enzyme. This is a suicide reaction: the enzyme is irreversibly inactivated. The sequence is that of Methylated-DNA--protein-cysteine methyltransferase (Mgmt) from Rattus norvegicus (Rat).